Here is a 295-residue protein sequence, read N- to C-terminus: Elongation factor Ts (295 aa).

The involved in Mg(2+) ion dislocation from EF-Tu stretch occupies residues 79–82; it reads TDFV.

It belongs to the EF-Ts family.

It localises to the cytoplasm. Functionally, associates with the EF-Tu.GDP complex and induces the exchange of GDP to GTP. It remains bound to the aminoacyl-tRNA.EF-Tu.GTP complex up to the GTP hydrolysis stage on the ribosome. The protein is Elongation factor Ts of Bacillus mycoides (strain KBAB4) (Bacillus weihenstephanensis).